Here is a 434-residue protein sequence, read N- to C-terminus: MNIQTDVLIIGTGVAGLYSALSLKNDIKVTMLTKSKACECNTYLAQGGISTALNKKDEPLFVDDTLRAGQYRNIKESVKILAAESKQNIDTLINFGMKFDKNEDGSLNYTREGAHSVNRIVHSTDETGKVVFETLYNEVKKRPNIEIIENIQVFDLISEDNICFGASALKNNTIYTFHSKATILASGGIGGLFKNSTNQRTLTADGIAMALRHNIDVRDLNYIQFHPTALYDSNTQEKKFLISESVRGEGGKLLSIENERFVDELLPRDVVANAIYKEEEKDNSKYVYLDITSMDADFITKRFPGIYKECLSRGLDITKNKIPVTPVQHYFMGGIKVDFNSLTSMKNLYACGEVSSTGVHGANRLASNSLLEGLVFSKRAAENINHSISFIERNEKNENLTLSDALSIIKCNRNIVINKFESILGEKKNELVNI.

FAD contacts are provided by residues 12-15 (TGVA), lysine 34, 41-48 (NTYLAQGG), and aspartate 205. Arginine 268 acts as the Proton donor/acceptor in catalysis. FAD-binding positions include glutamate 353 and 369–370 (SL).

It belongs to the FAD-dependent oxidoreductase 2 family. NadB subfamily. It depends on FAD as a cofactor.

It localises to the cytoplasm. It catalyses the reaction L-aspartate + O2 = iminosuccinate + H2O2. Its pathway is cofactor biosynthesis; NAD(+) biosynthesis; iminoaspartate from L-aspartate (oxidase route): step 1/1. Catalyzes the oxidation of L-aspartate to iminoaspartate, the first step in the de novo biosynthesis of NAD(+). This is L-aspartate oxidase (nadB) from Clostridium acetobutylicum (strain ATCC 824 / DSM 792 / JCM 1419 / IAM 19013 / LMG 5710 / NBRC 13948 / NRRL B-527 / VKM B-1787 / 2291 / W).